A 114-amino-acid polypeptide reads, in one-letter code: Probable 4-amino-4-deoxy-L-arabinose-phosphoundecaprenol flippase subunit ArnE (114 aa).

Helical transmembrane passes span 41–61 (PWLI…IYLL), 64–84 (LPLS…LIGS), and 94–114 (YHNW…GGLL). An EamA domain is found at 53 to 112 (GMLLWIYLLQRLPLSMAYPMLSINLVLVLIGSRLFFHEQISYHNWLGAGAIIIGALLLGG).

This sequence belongs to the ArnE family. In terms of assembly, heterodimer of ArnE and ArnF.

Its subcellular location is the cell inner membrane. Its pathway is bacterial outer membrane biogenesis; lipopolysaccharide biosynthesis. Its function is as follows. Translocates 4-amino-4-deoxy-L-arabinose-phosphoundecaprenol (alpha-L-Ara4N-phosphoundecaprenol) from the cytoplasmic to the periplasmic side of the inner membrane. This chain is Probable 4-amino-4-deoxy-L-arabinose-phosphoundecaprenol flippase subunit ArnE, found in Aeromonas salmonicida (strain A449).